Here is a 335-residue protein sequence, read N- to C-terminus: Beta-hexosaminidase (335 aa).

Substrate-binding positions include Asp-60, Arg-68, Arg-133, and 163–164 (KH). His-176 serves as the catalytic Proton donor/acceptor. Catalysis depends on Asp-247, which acts as the Nucleophile.

The protein belongs to the glycosyl hydrolase 3 family. NagZ subfamily.

The protein localises to the cytoplasm. The enzyme catalyses Hydrolysis of terminal non-reducing N-acetyl-D-hexosamine residues in N-acetyl-beta-D-hexosaminides.. It functions in the pathway cell wall biogenesis; peptidoglycan recycling. In terms of biological role, plays a role in peptidoglycan recycling by cleaving the terminal beta-1,4-linked N-acetylglucosamine (GlcNAc) from peptide-linked peptidoglycan fragments, giving rise to free GlcNAc, anhydro-N-acetylmuramic acid and anhydro-N-acetylmuramic acid-linked peptides. This Stenotrophomonas maltophilia (strain R551-3) protein is Beta-hexosaminidase.